The primary structure comprises 130 residues: S-adenosylmethionine decarboxylase proenzyme (130 aa).

Ser63 acts as the Schiff-base intermediate with substrate; via pyruvic acid in catalysis. A Pyruvic acid (Ser); by autocatalysis modification is found at Ser63. Catalysis depends on His68, which acts as the Proton acceptor; for processing activity. Residue Cys83 is the Proton donor; for catalytic activity of the active site.

This sequence belongs to the prokaryotic AdoMetDC family. Type 1 subfamily. In terms of assembly, heterotetramer of two alpha and two beta chains arranged as a dimer of alpha/beta heterodimers. Requires pyruvate as cofactor. Post-translationally, is synthesized initially as an inactive proenzyme. Formation of the active enzyme involves a self-maturation process in which the active site pyruvoyl group is generated from an internal serine residue via an autocatalytic post-translational modification. Two non-identical subunits are generated from the proenzyme in this reaction, and the pyruvate is formed at the N-terminus of the alpha chain, which is derived from the carboxyl end of the proenzyme. The post-translation cleavage follows an unusual pathway, termed non-hydrolytic serinolysis, in which the side chain hydroxyl group of the serine supplies its oxygen atom to form the C-terminus of the beta chain, while the remainder of the serine residue undergoes an oxidative deamination to produce ammonia and the pyruvoyl group blocking the N-terminus of the alpha chain.

The enzyme catalyses S-adenosyl-L-methionine + H(+) = S-adenosyl 3-(methylsulfanyl)propylamine + CO2. Its pathway is amine and polyamine biosynthesis; S-adenosylmethioninamine biosynthesis; S-adenosylmethioninamine from S-adenosyl-L-methionine: step 1/1. Functionally, catalyzes the decarboxylation of S-adenosylmethionine to S-adenosylmethioninamine (dcAdoMet), the propylamine donor required for the synthesis of the polyamines spermine and spermidine from the diamine putrescine. This Thermotoga maritima (strain ATCC 43589 / DSM 3109 / JCM 10099 / NBRC 100826 / MSB8) protein is S-adenosylmethionine decarboxylase proenzyme (speH).